The primary structure comprises 254 residues: Splicing factor tls1 (254 aa).

A compositionally biased stretch (basic and acidic residues) spans 69–83; it reads KEKQLNTANEPHEAN. Disordered regions lie at residues 69 to 90 and 195 to 216; these read KEKQ…SAQS and RKRQ…LRTS. A compositionally biased stretch (basic residues) spans 195 to 204; the sequence is RKRQKKRARM. Residues 205–216 are compositionally biased toward basic and acidic residues; sequence KEKLDSKALRTS.

Belongs to the TLS1 family. Component of the spliceosome. Interacts with brr2.

The protein resides in the cytoplasm. Its subcellular location is the nucleus. Its function is as follows. Plays a role in pre-mRNA splicing by facilitating excision of introns featuring long spacing between the branchpoint and 3'-splice site. Assists the splicing of several components involved in chromatin organization, such as several shelterin complex subunits. This is Splicing factor tls1 from Schizosaccharomyces pombe (strain 972 / ATCC 24843) (Fission yeast).